The sequence spans 184 residues: Trichothecene 15-O-acetyltransferase SAT16 (184 aa).

A substrate-binding site is contributed by His154.

This sequence belongs to the trichothecene O-acetyltransferase family.

It functions in the pathway mycotoxin biosynthesis. Its function is as follows. Trichothecene 15-O-acetyltransferase; part of the satratoxin SC2 cluster involved in the biosynthesis of satratoxins, trichothecene mycotoxins that are associated with human food poisonings. Satratoxins are suggested to be made by products of multiple gene clusters (SC1, SC2 and SC3) that encode 21 proteins in all, including polyketide synthases, acetyltransferases, and other enzymes expected to modify the trichothecene skeleton. SC1 encodes 10 proteins, SAT1 to SAT10. The largest are SAT8, which encodes a putative polyketide synthase (PKS) with a conventional non-reducing architecture, and SAT10, a putative protein containing four ankyrin repeats and thus may be involved in protein scaffolding. The putative short-chain reductase SAT3 may assist the PKS in some capacity. SAT6 contains a secretory lipase domain and acts probably as a trichothecene esterase. SAT5 encodes a putative acetyltransferase, and so, with SAT6, may affect endogenous protection from toxicity. The probable transcription factor SAT9 may regulate the expression of the SC1 cluster. SC2 encodes proteins SAT11 to SAT16, the largest of which encodes the putative reducing PKS SAT13. SAT11 is a cytochrome P450 monooxygenase, while SAT14 and SAT16 are probable acetyltransferases. The SC2 cluster may be regulated by the transcription factor SAT15. SC3 is a small cluster that encodes 5 proteins, SAT17 to SAT21. SAT21 is a putative MFS-type transporter which may have a role in exporting secondary metabolites. The four other proteins putatively encoded in SC3 include the taurine hydroxylase-like protein SAT17, the O-methyltransferase SAT18, the acetyltransferase SAT19, and the Cys6-type zinc finger SAT20, the latter being probably involved in regulation of SC3 expression. The polypeptide is Trichothecene 15-O-acetyltransferase SAT16 (Stachybotrys chartarum (strain CBS 109288 / IBT 7711) (Toxic black mold)).